The following is a 420-amino-acid chain: MDAFKVIGGKPLRGDVVISGAKNAALPILMSALLSKTPVVFSNVPQLNDILTTVKLLGQLGAKTKWLNEEKLMIDASSIDVCRAPYDLVKTMRASILVLGPLLARMGHAEVSLPGGCAIGARPVNLHIQGLKLMGADITVEDGYIVAKKQGRLTGATIFMDTVSVTGTENLMMAAALAEGITIIENAAREPEIVDLANCLISMGAKITGAGTDTLTIEGVSELCGKEYSVMPDRIETGTFLVAAAVTQGHIKCLNTDPSSLEAVLSKLQEAGATITTGDDWIELEMSAPAKAVNVRTAPHPAFPTDMQAQFMTMNVLAEGTATVIETIFENRFMHVPELQRMGADIALEGNTAIVKGVASLNGAQVMATDLRASASLVIAGLVAKSPTQVDRIYHIDRGYLCIEGKLQSLGADITRIKVD.

22–23 (KN) contributes to the phosphoenolpyruvate binding site. A UDP-N-acetyl-alpha-D-glucosamine-binding site is contributed by arginine 93. Cysteine 117 serves as the catalytic Proton donor. The residue at position 117 (cysteine 117) is a 2-(S-cysteinyl)pyruvic acid O-phosphothioketal. Residues aspartate 306 and isoleucine 328 each coordinate UDP-N-acetyl-alpha-D-glucosamine.

Belongs to the EPSP synthase family. MurA subfamily.

The protein localises to the cytoplasm. It carries out the reaction phosphoenolpyruvate + UDP-N-acetyl-alpha-D-glucosamine = UDP-N-acetyl-3-O-(1-carboxyvinyl)-alpha-D-glucosamine + phosphate. Its pathway is cell wall biogenesis; peptidoglycan biosynthesis. Cell wall formation. Adds enolpyruvyl to UDP-N-acetylglucosamine. In Colwellia psychrerythraea (strain 34H / ATCC BAA-681) (Vibrio psychroerythus), this protein is UDP-N-acetylglucosamine 1-carboxyvinyltransferase.